Here is a 556-residue protein sequence, read N- to C-terminus: Formate--tetrahydrofolate ligase (556 aa).

65 to 72 is an ATP binding site; sequence TPAGEGKS.

This sequence belongs to the formate--tetrahydrofolate ligase family.

It carries out the reaction (6S)-5,6,7,8-tetrahydrofolate + formate + ATP = (6R)-10-formyltetrahydrofolate + ADP + phosphate. Its pathway is one-carbon metabolism; tetrahydrofolate interconversion. In Clostridium novyi (strain NT), this protein is Formate--tetrahydrofolate ligase.